Here is a 438-residue protein sequence, read N- to C-terminus: GTPase Der (438 aa).

2 consecutive EngA-type G domains span residues 4–168 (PIVA…KNEG) and 177–352 (IKIA…DNYC). GTP is bound by residues 10–17 (GRPNVGKS), 57–61 (DTGGI), 120–123 (NKID), 183–190 (GKPNVGKS), 230–234 (DTAGV), and 295–298 (NKWD). Residues 353–437 (KQIKTGILND…GIKLEFRERK (85 aa)) enclose the KH-like domain.

It belongs to the TRAFAC class TrmE-Era-EngA-EngB-Septin-like GTPase superfamily. EngA (Der) GTPase family. As to quaternary structure, associates with the 50S ribosomal subunit.

GTPase that plays an essential role in the late steps of ribosome biogenesis. This Clostridium kluyveri (strain NBRC 12016) protein is GTPase Der.